The following is a 186-amino-acid chain: CRS2-like protein, chloroplastic (186 aa).

Residues 1 to 49 (MAMTAASVFGSGGCLELLTSSKAMRGKLWTRLAPFISKRHASTSQTSLS) constitute a chloroplast transit peptide. Tyrosine 73 lines the tRNA pocket. Residue histidine 78 is the Proton acceptor of the active site. Residues tyrosine 123, asparagine 125, and asparagine 171 each coordinate tRNA.

It belongs to the PTH family.

It localises to the plastid. The protein localises to the chloroplast. In Oryza sativa subsp. japonica (Rice), this protein is CRS2-like protein, chloroplastic.